We begin with the raw amino-acid sequence, 431 residues long: Isocitrate lyase (431 aa).

The interval 1–21 (MSNVGTPRTAQEIQQDWDTNP) is disordered. 93–95 (SGW) contributes to the substrate binding site. Residue Asp155 participates in Mg(2+) binding. Catalysis depends on Cys193, which acts as the Proton acceptor. Residues 194 to 195 (GH), Arg230, 315 to 319 (NCSPS), and Thr349 each bind substrate.

The protein belongs to the isocitrate lyase/PEP mutase superfamily. Isocitrate lyase family. As to quaternary structure, homotetramer. Requires Mg(2+) as cofactor.

It catalyses the reaction D-threo-isocitrate = glyoxylate + succinate. Its pathway is carbohydrate metabolism; glyoxylate cycle; (S)-malate from isocitrate: step 1/2. Functionally, involved in the metabolic adaptation in response to environmental changes. Catalyzes the reversible formation of succinate and glyoxylate from isocitrate, a key step of the glyoxylate cycle, which operates as an anaplerotic route for replenishing the tricarboxylic acid cycle during growth on fatty acid substrates. The protein is Isocitrate lyase (aceA) of Corynebacterium efficiens (strain DSM 44549 / YS-314 / AJ 12310 / JCM 11189 / NBRC 100395).